The primary structure comprises 291 residues: Bifunctional protein FolD (291 aa).

Residues 171–173 and Ile239 each bind NADP(+); that span reads GVS.

Belongs to the tetrahydrofolate dehydrogenase/cyclohydrolase family. In terms of assembly, homodimer.

It catalyses the reaction (6R)-5,10-methylene-5,6,7,8-tetrahydrofolate + NADP(+) = (6R)-5,10-methenyltetrahydrofolate + NADPH. The enzyme catalyses (6R)-5,10-methenyltetrahydrofolate + H2O = (6R)-10-formyltetrahydrofolate + H(+). It participates in one-carbon metabolism; tetrahydrofolate interconversion. Its function is as follows. Catalyzes the oxidation of 5,10-methylenetetrahydrofolate to 5,10-methenyltetrahydrofolate and then the hydrolysis of 5,10-methenyltetrahydrofolate to 10-formyltetrahydrofolate. This chain is Bifunctional protein FolD, found in Xylella fastidiosa (strain Temecula1 / ATCC 700964).